A 452-amino-acid chain; its full sequence is Glutamate--tRNA ligase 2 (452 aa).

The 'HIGH' region signature appears at 8 to 18 (PSPTGRLHVGN). Residues 246 to 250 (KLSKR) carry the 'KMSKS' region motif. Residue Lys-249 participates in ATP binding.

This sequence belongs to the class-I aminoacyl-tRNA synthetase family. Glutamate--tRNA ligase type 1 subfamily. Monomer.

It is found in the cytoplasm. The catalysed reaction is tRNA(Glu) + L-glutamate + ATP = L-glutamyl-tRNA(Glu) + AMP + diphosphate. Catalyzes the attachment of glutamate to tRNA(Glu) in a two-step reaction: glutamate is first activated by ATP to form Glu-AMP and then transferred to the acceptor end of tRNA(Glu). This chain is Glutamate--tRNA ligase 2, found in Erythrobacter litoralis (strain HTCC2594).